Reading from the N-terminus, the 356-residue chain is Uroporphyrinogen decarboxylase (356 aa).

Residues Arg33, Ala35, Arg37, Arg46, Asp82, Tyr159, Ser214, and His334 each coordinate coproporphyrinogen I. Coproporphyrinogen III-binding residues include Arg33, Ala35, and Arg37. Residues Asp82, Tyr159, Ser214, and His334 each contribute to the coproporphyrinogen III site.

This sequence belongs to the uroporphyrinogen decarboxylase family. In terms of assembly, homodimer.

Its subcellular location is the cytoplasm. The protein localises to the cytosol. It catalyses the reaction uroporphyrinogen III + 4 H(+) = coproporphyrinogen III + 4 CO2. It functions in the pathway porphyrin-containing compound metabolism; protoporphyrin-IX biosynthesis; coproporphyrinogen-III from 5-aminolevulinate: step 4/4. Its function is as follows. Catalyzes the decarboxylation of four acetate groups of uroporphyrinogen-III to yield coproporphyrinogen-III. In Drosophila melanogaster (Fruit fly), this protein is Uroporphyrinogen decarboxylase.